The following is a 72-amino-acid chain: UPF0154 protein RBAM_017710 (72 aa).

Residues 4–24 (WVGILVGVVALLIGVALGFFI) traverse the membrane as a helical segment.

It belongs to the UPF0154 family.

It localises to the cell membrane. This Bacillus velezensis (strain DSM 23117 / BGSC 10A6 / LMG 26770 / FZB42) (Bacillus amyloliquefaciens subsp. plantarum) protein is UPF0154 protein RBAM_017710.